A 705-amino-acid polypeptide reads, in one-letter code: Glycine--tRNA ligase beta subunit (705 aa).

The protein belongs to the class-II aminoacyl-tRNA synthetase family. Tetramer of two alpha and two beta subunits.

The protein resides in the cytoplasm. It catalyses the reaction tRNA(Gly) + glycine + ATP = glycyl-tRNA(Gly) + AMP + diphosphate. This is Glycine--tRNA ligase beta subunit from Persephonella marina (strain DSM 14350 / EX-H1).